A 473-amino-acid polypeptide reads, in one-letter code: Adenosylhomocysteinase (473 aa).

Thr64, Asp139, and Glu199 together coordinate substrate. 200–202 contributes to the NAD(+) binding site; it reads TTT. Residues Lys229 and Asp233 each coordinate substrate. NAD(+) is bound by residues Asn234, 263–268, Glu286, Asn321, 342–344, and Asn387; these read GYGDVG and IGH.

It belongs to the adenosylhomocysteinase family. NAD(+) serves as cofactor.

It localises to the cytoplasm. The enzyme catalyses S-adenosyl-L-homocysteine + H2O = L-homocysteine + adenosine. Its pathway is amino-acid biosynthesis; L-homocysteine biosynthesis; L-homocysteine from S-adenosyl-L-homocysteine: step 1/1. In terms of biological role, may play a key role in the regulation of the intracellular concentration of adenosylhomocysteine. This chain is Adenosylhomocysteinase, found in Burkholderia mallei (strain SAVP1).